We begin with the raw amino-acid sequence, 105 residues long: Large ribosomal subunit protein uL24 (105 aa).

Positions 67 to 105 (HISNLNPVDPKTGKATRIGRRKSSEGTLVRYSKKSGEEI) are disordered.

This sequence belongs to the universal ribosomal protein uL24 family. In terms of assembly, part of the 50S ribosomal subunit.

Its function is as follows. One of two assembly initiator proteins, it binds directly to the 5'-end of the 23S rRNA, where it nucleates assembly of the 50S subunit. Functionally, one of the proteins that surrounds the polypeptide exit tunnel on the outside of the subunit. In Bacteroides thetaiotaomicron (strain ATCC 29148 / DSM 2079 / JCM 5827 / CCUG 10774 / NCTC 10582 / VPI-5482 / E50), this protein is Large ribosomal subunit protein uL24.